The sequence spans 677 residues: Fermitin family homolog 1 (677 aa).

The region spanning 96-653 is the FERM domain; sequence MLRLRLPNLK…HEYIGGYIFL (558 aa). A phosphoserine mark is found at Ser-170, Ser-179, and Ser-361. In terms of domain architecture, PH spans 377-473; sequence KLFRPKKLLP…WMAACMLASK (97 aa).

The protein belongs to the kindlin family. In terms of assembly, interacts with the cytoplasmic domain of integrins ITGB1 and ITGB3. In terms of tissue distribution, expressed in brain, skeletal muscle, kidney, colon, adrenal gland, prostate, and placenta. Weakly or not expressed in heart, thymus, spleen, liver, small intestine, bone marrow, lung and peripheral blood leukocytes. Overexpressed in some colon and lung tumors. In skin, it is localized within the epidermis and particularly in basal keratocytes. Not detected in epidermal melanocytes and dermal fibroblasts.

The protein localises to the cytoplasm. Its subcellular location is the cytoskeleton. It is found in the cell junction. It localises to the focal adhesion. The protein resides in the cell projection. The protein localises to the ruffle membrane. In terms of biological role, involved in cell adhesion. Contributes to integrin activation. When coexpressed with talin, potentiates activation of ITGA2B. Required for normal keratinocyte proliferation. Required for normal polarization of basal keratinocytes in skin, and for normal cell shape. Required for normal adhesion of keratinocytes to fibronectin and laminin, and for normal keratinocyte migration to wound sites. May mediate TGF-beta 1 signaling in tumor progression. This is Fermitin family homolog 1 (FERMT1) from Homo sapiens (Human).